The following is a 431-amino-acid chain: Mannan endo-1,4-beta-mannosidase 7 (431 aa).

Residues 1-25 (MKLLALFPFLAIVIQLSCWELGTDA) form the signal peptide. 2 residues coordinate substrate: tryptophan 87 and asparagine 202. Glutamate 203 acts as the Proton donor in catalysis. Substrate is bound at residue tyrosine 280. Glutamate 320 (nucleophile) is an active-site residue. A substrate-binding site is contributed by tryptophan 362.

This sequence belongs to the glycosyl hydrolase 5 (cellulase A) family. Expressed in stems, flowers, siliques and seeds. Expressed in root vasculature, leaf hydathodes, anther filaments, stigma, sepal vasculature, at the base and apical parts of siliques, and replum. Expressed in the micropylar endosperm and radicle tip in early germinating seeds.

It is found in the secreted. It catalyses the reaction Random hydrolysis of (1-&gt;4)-beta-D-mannosidic linkages in mannans, galactomannans and glucomannans.. Required for both, loosening of the micropylar endosperm, and rupture of the seed coat in germinating seeds. May participate in the hydrolysis of the mannans in the cell wall of germinating seeds. The chain is Mannan endo-1,4-beta-mannosidase 7 (MAN7) from Arabidopsis thaliana (Mouse-ear cress).